The following is a 282-amino-acid chain: Putative phosphatase in upp 3'region (282 aa).

D17 functions as the Nucleophile in the catalytic mechanism. D17 contributes to the Mg(2+) binding site. L18 is a binding site for phosphate. Mg(2+) is bound at residue D19. Residues 53–54 (TG) and K211 each bind phosphate. 2 residues coordinate Mg(2+): D234 and S235. N237 provides a ligand contact to phosphate.

This sequence belongs to the HAD-like hydrolase superfamily. Cof family. Mg(2+) is required as a cofactor.

This Metamycoplasma hominis (Mycoplasma hominis) protein is Putative phosphatase in upp 3'region.